We begin with the raw amino-acid sequence, 157 residues long: DNA gyrase inhibitor (157 aa).

Belongs to the DNA gyrase inhibitor family. As to quaternary structure, interacts with DNA gyrase.

Its subcellular location is the cytoplasm. Functionally, inhibits the supercoiling activity of DNA gyrase. Acts by inhibiting DNA gyrase at an early step, prior to (or at the step of) binding of DNA by the gyrase. It protects cells against toxins that target DNA gyrase, by inhibiting activity of these toxins and reducing the formation of lethal double-strand breaks in the cell. This Klebsiella pneumoniae (strain 342) protein is DNA gyrase inhibitor.